Here is a 257-residue protein sequence, read N- to C-terminus: S-methyl-5'-thioadenosine phosphorylase (257 aa).

Residues Ser10, 50–51 (RH), and 83–84 (TA) contribute to the phosphate site. Met180 contacts substrate. Thr181 lines the phosphate pocket. 204–206 (DYD) is a binding site for substrate.

Belongs to the PNP/MTAP phosphorylase family. MTAP subfamily. As to quaternary structure, homohexamer. Dimer of a homotrimer.

The catalysed reaction is S-methyl-5'-thioadenosine + phosphate = 5-(methylsulfanyl)-alpha-D-ribose 1-phosphate + adenine. It carries out the reaction adenosine + phosphate = alpha-D-ribose 1-phosphate + adenine. It participates in amino-acid biosynthesis; L-methionine biosynthesis via salvage pathway; S-methyl-5-thio-alpha-D-ribose 1-phosphate from S-methyl-5'-thioadenosine (phosphorylase route): step 1/1. Its function is as follows. Catalyzes the reversible phosphorylation of S-methyl-5'-thioadenosine (MTA) to adenine and 5-methylthioribose-1-phosphate. Involved in the breakdown of MTA, a major by-product of polyamine biosynthesis. Responsible for the first step in the methionine salvage pathway after MTA has been generated from S-adenosylmethionine. Has broad substrate specificity with 6-aminopurine nucleosides as preferred substrates. Can also use adenosine as substrate to form ribose 1-phosphate. The chain is S-methyl-5'-thioadenosine phosphorylase from Thermococcus kodakarensis (strain ATCC BAA-918 / JCM 12380 / KOD1) (Pyrococcus kodakaraensis (strain KOD1)).